Here is an 816-residue protein sequence, read N- to C-terminus: uncharacterized protein (816 aa).

Disordered stretches follow at residues 1–34 (MLFN…QQES), 65–101 (RQNN…GYKN), 154–406 (DEKD…ENPE), and 770–816 (RQHK…VMYA). Residues 18-32 (NQSSANTQNQQAHQQ) show a composition bias toward low complexity. Over residues 83 to 92 (VSATSAYSKQ) the composition is skewed to polar residues. Positions 161 to 223 (TTTSSSTSTS…STSTTSTSTT (63 aa)) are enriched in low complexity. Positions 246–260 (ESTSIGKGTADSAQI) are enriched in polar residues. Ser-286 is modified (phosphoserine). A compositionally biased stretch (basic and acidic residues) spans 292–316 (DEQKEEKSDVKKVNPPSGEEKKEVE). A compositionally biased stretch (acidic residues) spans 317–326 (AEGDAEEETE). Residues 327–342 (QSSAEESAERTSTPET) are compositionally biased toward low complexity. Residues Ser-343 and Ser-347 each carry the phosphoserine modification. A compositionally biased stretch (acidic residues) spans 343 to 353 (SEPESEEDESP). Residues 380–396 (KSPTSSSTQKSKTAAPS) show a composition bias toward low complexity. Basic and acidic residues-rich tracts occupy residues 770–792 (RQHK…DRSQ) and 799–816 (PKDD…VMYA). Thr-809 carries the post-translational modification Phosphothreonine.

In terms of processing, pyrophosphorylated by 5-diphosphoinositol pentakisphosphate (5-IP7). Serine pyrophosphorylation is achieved by Mg(2+)-dependent, but enzyme independent transfer of a beta-phosphate from a inositol pyrophosphate to a pre-phosphorylated serine residue.

This is an uncharacterized protein from Saccharomyces cerevisiae (strain ATCC 204508 / S288c) (Baker's yeast).